A 299-amino-acid polypeptide reads, in one-letter code: Oxygen-dependent coproporphyrinogen-III oxidase (299 aa).

Ser92 contributes to the substrate binding site. A divalent metal cation-binding residues include His96 and His106. The active-site Proton donor is His106. Residue 108 to 110 participates in substrate binding; sequence NVR. The a divalent metal cation site is built by His145 and His175. Residues 240–275 are important for dimerization; that stretch reads YVEFNLVWDRGTLFGLQTGGRTESILMSMPPLVRWE. A substrate-binding site is contributed by 258–260; the sequence is GGR.

This sequence belongs to the aerobic coproporphyrinogen-III oxidase family. In terms of assembly, homodimer. A divalent metal cation is required as a cofactor.

It localises to the cytoplasm. The enzyme catalyses coproporphyrinogen III + O2 + 2 H(+) = protoporphyrinogen IX + 2 CO2 + 2 H2O. It functions in the pathway porphyrin-containing compound metabolism; protoporphyrin-IX biosynthesis; protoporphyrinogen-IX from coproporphyrinogen-III (O2 route): step 1/1. In terms of biological role, involved in the heme biosynthesis. Catalyzes the aerobic oxidative decarboxylation of propionate groups of rings A and B of coproporphyrinogen-III to yield the vinyl groups in protoporphyrinogen-IX. The chain is Oxygen-dependent coproporphyrinogen-III oxidase from Shigella flexneri.